Here is a 216-residue protein sequence, read N- to C-terminus: Cyclic AMP receptor protein (216 aa).

6–126 (LFHGLAPEEV…HNLAALLARR (121 aa)) contacts a nucleoside 3',5'-cyclic phosphate. Residues 75-78 (GEMS) and 85-86 (RS) each bind 3',5'-cyclic AMP. Residues 140-206 (EEARNRVAYA…PGTVEVREAA (67 aa)) form the HTH crp-type domain. The segment at residues 166–185 (HHELAALAGTSRETVSRVLH) is a DNA-binding region (H-T-H motif).

Homodimer.

Functionally, activates transcription. Positively regulates six promoters upstream of the TTHB186, TTHB147, TTHB178, TTHB159, TTHA0771 and TTHA0176 genes in a cAMP-dependent manner. Regulated genes include clustered regularly interspaced short palindromic repeat (CRISPR) associated (Cas) genes, and the genes encoding a putative transcriptional regulator, a protein containing the exonuclease III-like domain of DNA polymerase, a GCN5-related acetyltransferase homolog, and some T.thermophilus-specific proteins of unknown function. The consensus DNA-binding site of this transcriptional regulator is 5'-(CT)NNG(G/T)(G/T)C(A/C)N(A/T)NNTCACAN(G/C)(G/C)-3' in which N is G, A, T or C. The chain is Cyclic AMP receptor protein from Thermus thermophilus (strain ATCC 27634 / DSM 579 / HB8).